A 167-amino-acid polypeptide reads, in one-letter code: Ribonuclease P protein subunit p20 (167 aa).

Residues 1-36 (MMGSNYPEHGTKPRSAKYHKQQNHRVVRKQPPRPAV) are disordered. Positions 12 to 31 (KPRSAKYHKQQNHRVVRKQP) are enriched in basic residues.

In terms of assembly, interacts with Smn.

Its subcellular location is the nucleus. It is found in the nucleolus. The protein localises to the cytoplasm. The protein resides in the cytoplasmic granule. Its function is as follows. Component of ribonuclease P, a protein complex that generates mature tRNA molecules by cleaving their 5'-ends. Also a component of RNase MRP complex, which cleaves pre-rRNA sequences. This chain is Ribonuclease P protein subunit p20, found in Drosophila melanogaster (Fruit fly).